Reading from the N-terminus, the 166-residue chain is Protein FAM163B (166 aa).

A helical transmembrane segment spans residues V6–C26. S40 is modified (phosphoserine).

This sequence belongs to the FAM163 family.

Its subcellular location is the membrane. The polypeptide is Protein FAM163B (FAM163B) (Homo sapiens (Human)).